Reading from the N-terminus, the 465-residue chain is GTPase Der (465 aa).

2 consecutive EngA-type G domains span residues 3 to 167 (PLVA…PEEG) and 179 to 352 (VRIA…ASAT). GTP contacts are provided by residues 9-16 (GRPNVGKS), 57-61 (DTGGI), 119-122 (NKID), 185-192 (GRPNVGKS), 232-236 (DTAGL), and 297-300 (NKWD). The 85-residue stretch at 353–437 (HEFSTSEVNQ…PVRFIFREGA (85 aa)) folds into the KH-like domain.

The protein belongs to the TRAFAC class TrmE-Era-EngA-EngB-Septin-like GTPase superfamily. EngA (Der) GTPase family. In terms of assembly, associates with the 50S ribosomal subunit.

In terms of biological role, GTPase that plays an essential role in the late steps of ribosome biogenesis. The polypeptide is GTPase Der (Xanthomonas axonopodis pv. citri (strain 306)).